Reading from the N-terminus, the 89-residue chain is MSITAERKQELLKEFATANADTGSPEVQVALLTERIKNLTEHFKEHQKDNHSRRGLLKLVSQRRRLLDYVKRKDEARYQALIEKLGLRR.

Belongs to the universal ribosomal protein uS15 family. In terms of assembly, part of the 30S ribosomal subunit. Forms a bridge to the 50S subunit in the 70S ribosome, contacting the 23S rRNA.

Its function is as follows. One of the primary rRNA binding proteins, it binds directly to 16S rRNA where it helps nucleate assembly of the platform of the 30S subunit by binding and bridging several RNA helices of the 16S rRNA. Functionally, forms an intersubunit bridge (bridge B4) with the 23S rRNA of the 50S subunit in the ribosome. This chain is Small ribosomal subunit protein uS15, found in Chelativorans sp. (strain BNC1).